The chain runs to 795 residues: Lon protease (795 aa).

In terms of domain architecture, Lon N-terminal spans 7–213 (PQILVVRNQV…KIIGSGIEDL (207 aa)). 379 to 386 (GPPGVGKS) lines the ATP pocket. The Lon proteolytic domain maps to 615–795 (DALPGIVNGM…YKDIYNKIFN (181 aa)). Active-site residues include Ser702 and Lys745.

Belongs to the peptidase S16 family. Homohexamer. Organized in a ring with a central cavity.

Its subcellular location is the cytoplasm. It catalyses the reaction Hydrolysis of proteins in presence of ATP.. Functionally, ATP-dependent serine protease that mediates the selective degradation of mutant and abnormal proteins as well as certain short-lived regulatory proteins. Required for cellular homeostasis and for survival from DNA damage and developmental changes induced by stress. Degrades polypeptides processively to yield small peptide fragments that are 5 to 10 amino acids long. Binds to DNA in a double-stranded, site-specific manner. The chain is Lon protease from Mycoplasma pneumoniae (strain ATCC 29342 / M129 / Subtype 1) (Mycoplasmoides pneumoniae).